The primary structure comprises 143 residues: Peptide methionine sulfoxide reductase MsrB (143 aa).

Residues 16-139 form the MsrB domain; sequence DAELRRRLTP…NSAALNFESR (124 aa). Cys55, Cys58, Cys104, and Cys107 together coordinate Zn(2+). Cys128 acts as the Nucleophile in catalysis.

Belongs to the MsrB Met sulfoxide reductase family. Zn(2+) serves as cofactor.

It carries out the reaction L-methionyl-[protein] + [thioredoxin]-disulfide + H2O = L-methionyl-(R)-S-oxide-[protein] + [thioredoxin]-dithiol. The polypeptide is Peptide methionine sulfoxide reductase MsrB (Burkholderia multivorans (strain ATCC 17616 / 249)).